A 340-amino-acid polypeptide reads, in one-letter code: MSAVTQVVETAIGCVIPSCIEFGSSMRIATSLGSPSVTQSPCVNRDVEDIARTARESIRFFLAELSIECVPYTQDPALEAQVASATRCWPDRERLAPHIRTGIVIAATAYAHNSLATRTLIALYTAIGVALDEPDILESANAIGFHHSLCTETSERPSAILDEWRRILARMWDHFPRFGASCILTSTLQFLNMTMLENETKGKVLNRTAMPFVEYRRMTDGFPEVYTAFIWEKGRFPDVQVYMQAIPNAMRFINFGNDILSFYKEEAAGETGTYIHDRARLTGLSSVETLREVVEETVSAWRQVCEILGEGIARDAWNSFVRGYVTFHVHNPRYRLSELL.

Mg(2+) is bound by residues Asp132, Glu197, Asn257, Ser261, and Glu265. The short motif at 132 to 138 is the DDXXXXD motif element; it reads DEPDILE. The short motif at 257-265 is the NSE/DTE motif element; sequence NDILSFYKE.

It belongs to the trichodiene synthase family. It depends on Mg(2+) as a cofactor.

Its function is as follows. Terpene cyclase that catalyzes the cyclization of farnesyl diphosphate (FPP) to a single major terpene scaffold whose chemical structure is still unknown. In Postia placenta (strain ATCC 44394 / Madison 698-R) (Brown rot fungus), this protein is Terpene synthase 29.